The primary structure comprises 58 residues: Large ribosomal subunit protein bL32 (58 aa).

The protein belongs to the bacterial ribosomal protein bL32 family.

The polypeptide is Large ribosomal subunit protein bL32 (Prochlorococcus marinus (strain MIT 9515)).